The sequence spans 500 residues: V-type proton ATPase subunit B (500 aa).

Belongs to the ATPase alpha/beta chains family. As to quaternary structure, V-ATPase is a heteromultimeric enzyme composed of a peripheral catalytic V1 complex (main components: subunits A, B, C, D, E, and F) attached to an integral membrane V0 proton pore complex (main component: the proteolipid protein).

Its function is as follows. Non-catalytic subunit of the peripheral V1 complex of vacuolar ATPase. V-ATPase is responsible for acidifying a variety of intracellular compartments in eukaryotic cells. The chain is V-type proton ATPase subunit B from Cyanidium caldarium (Red alga).